The chain runs to 202 residues: Large ribosomal subunit protein bL17 (202 aa).

Positions 130-142 are enriched in low complexity; that stretch reads AAPAATAPAPVEE. The tract at residues 130–202 is disordered; sequence AAPAATAPAP…TEESTEDDKA (73 aa). 2 stretches are compositionally biased toward acidic residues: residues 143-168 and 177-202; these read APAE…EASP and QPVE…DDKA.

The protein belongs to the bacterial ribosomal protein bL17 family. As to quaternary structure, part of the 50S ribosomal subunit. Contacts protein L32.

This Nocardioides sp. (strain ATCC BAA-499 / JS614) protein is Large ribosomal subunit protein bL17.